The primary structure comprises 315 residues: MSESLRIIFAGTPDFAARHLDALLSSGHNVVGVFTQPDRPAGRGKKLMPSPVKVLAEEKGLPVFQPVSLRPQENQQLVADLQADVMVVVAYGLILPKAVLEMPRLGCINVHGSLLPRWRGAAPIQRSLWAGDAETGVTIMQMDVGLDTGDMLYKLSCPITAEDTSGTLYDKLAELGPQGLITTLKQLADGTAKPEVQDETLVTYAEKLSKEEARIDWSLSAAQLERCIRAFNPWPMSWLEIEGQPVKVWKASVIDTATNAAPGTILEANKQGIQVATGDGILNLLSLQPAGKKAMSAQDLLNSRREWFVPGNRLA.

A (6S)-5,6,7,8-tetrahydrofolate-binding site is contributed by 113–116 (SLLP).

It belongs to the Fmt family.

The enzyme catalyses L-methionyl-tRNA(fMet) + (6R)-10-formyltetrahydrofolate = N-formyl-L-methionyl-tRNA(fMet) + (6S)-5,6,7,8-tetrahydrofolate + H(+). In terms of biological role, attaches a formyl group to the free amino group of methionyl-tRNA(fMet). The formyl group appears to play a dual role in the initiator identity of N-formylmethionyl-tRNA by promoting its recognition by IF2 and preventing the misappropriation of this tRNA by the elongation apparatus. The sequence is that of Methionyl-tRNA formyltransferase from Shigella dysenteriae serotype 1 (strain Sd197).